A 372-amino-acid polypeptide reads, in one-letter code: Glutamate 5-kinase (372 aa).

Lys14 is an ATP binding site. Ser54, Asp141, and Asn153 together coordinate substrate. ATP contacts are provided by residues Thr173 to Asp174 and Thr215 to Lys221. The region spanning Lys280–Asp358 is the PUA domain.

The protein belongs to the glutamate 5-kinase family.

It localises to the cytoplasm. The catalysed reaction is L-glutamate + ATP = L-glutamyl 5-phosphate + ADP. The protein operates within amino-acid biosynthesis; L-proline biosynthesis; L-glutamate 5-semialdehyde from L-glutamate: step 1/2. Catalyzes the transfer of a phosphate group to glutamate to form L-glutamate 5-phosphate. The polypeptide is Glutamate 5-kinase (Shewanella woodyi (strain ATCC 51908 / MS32)).